The primary structure comprises 86 residues: Large ribosomal subunit protein bL28 (86 aa).

This sequence belongs to the bacterial ribosomal protein bL28 family.

This chain is Large ribosomal subunit protein bL28, found in Bacteroides fragilis (strain ATCC 25285 / DSM 2151 / CCUG 4856 / JCM 11019 / LMG 10263 / NCTC 9343 / Onslow / VPI 2553 / EN-2).